A 90-amino-acid chain; its full sequence is N(2)-fixation sustaining protein CowN (90 aa).

It belongs to the CowN family.

Its function is as follows. Is required to sustain N(2)-dependent growth in the presence of low levels of carbon monoxide (CO). Probably acts by protecting the N(2) fixation ability of the nitrogenase complex, which is inactivated in the presence of CO. The chain is N(2)-fixation sustaining protein CowN from Halorhodospira halophila (strain DSM 244 / SL1) (Ectothiorhodospira halophila (strain DSM 244 / SL1)).